An 832-amino-acid chain; its full sequence is Thymine dioxygenase JBP1-A (832 aa).

The segment covering 1-12 (MKQKRGKQDVKM) has biased composition (basic and acidic residues). Residues 1–24 (MKQKRGKQDVKMLESAPPQLLPKK) form a disordered region. The interval 80–282 (VVGGVFLPGA…RLTCVCYYRA (203 aa)) is thymine dioxygenase. Fe cation contacts are provided by H207, D209, and H257. R273 is a 2-oxoglutarate binding site. Residues 409–578 (LGGALKAAEE…IEEARRRGSS (170 aa)) form a DNA-binding JBP1 domain region.

Belongs to the TET family. JBP1 subfamily. In terms of assembly, monomer. Binds to DNA as a monomer. Requires Fe(2+) as cofactor.

It is found in the nucleus. It carries out the reaction thymine + 2-oxoglutarate + O2 = 5-hydroxymethyluracil + succinate + CO2. Functionally, dioxygenase that catalyzes the first step of DNA base J (beta-d-glucosyl-HOMedU) biosynthesis by converting thymine to 5-hydroxymethyluracil (HOMedU). DNA base J is a hypermodified thymidine residue found in the genome of kinetoplastid parasites, which is localized primarily to repetitive DNA, namely the telomeres, and is implicated in the regulation of antigenic variation. Also specifically binds to base J-containing DNA (J-DNA). Involved in propagation and maintenance of DNA base J synthesis initiated by JBP2 by specifically binding already synthesized DNA base J and propagating J synthesis. Thymine dioxygenase activity and J-DNA-binding are independent functions. The protein is Thymine dioxygenase JBP1-A (JBP1A) of Trypanosoma cruzi (strain CL Brener).